A 62-amino-acid polypeptide reads, in one-letter code: Large ribosomal subunit protein eL37 (62 aa).

Cys20, Cys23, Cys35, and Cys38 together coordinate Zn(2+). A C4-type zinc finger spans residues 20–38 (CRRCGRKAFNVKKGYCAAC).

It belongs to the eukaryotic ribosomal protein eL37 family. Zn(2+) serves as cofactor.

In terms of biological role, binds to the 23S rRNA. This Pyrococcus abyssi (strain GE5 / Orsay) protein is Large ribosomal subunit protein eL37 (rpl37e).